The sequence spans 490 residues: Cysteine protease 1 (490 aa).

Residues 1-31 (MAGGGGKSVAAALAMACFLLILAAFAPPAAA) form the signal peptide. Positions 32–154 (APPDIMSIIR…EAYRHDGVEA (123 aa)) are cleaved as a propeptide — activation peptide. Disulfide bonds link cysteine 177/cysteine 220, cysteine 211/cysteine 253, cysteine 311/cysteine 364, cysteine 395/cysteine 407, and cysteine 401/cysteine 422. The active site involves cysteine 180. Residues histidine 317 and asparagine 339 contribute to the active site. An N-linked (GlcNAc...) asparagine glycan is attached at asparagine 356. Positions 379-490 (NPKPSPPSPA…FVVLNREDLV (112 aa)) are cleaved as a propeptide — removed in mature form.

Belongs to the peptidase C1 family. Highly expressed in the tapetum and developing pollen of the anther locules. Weakly expressed in root and germinating seed, hardly in the anther-less-flower and not detected in leaf.

Functionally, cysteine protease that may play a role in pollen development. May be regulated by the transcription factor UDT1 in developing anthers and play a role in tapetum development. Positively regulated by the transcription factor TDR in developing anthers and may play a role in tapetum programmed cell death (PCD). In Oryza sativa subsp. japonica (Rice), this protein is Cysteine protease 1 (CP1).